Consider the following 506-residue polypeptide: (+)-piperitol/(+)-sesamin synthase CYP81Q2 (506 aa).

The helical transmembrane segment at 3 to 23 (AEMLYSALALTFAIFMVYRIL) threads the bilayer. Cysteine 439 lines the heme pocket.

This sequence belongs to the cytochrome P450 family. Heme is required as a cofactor. Expressed in seeds.

The protein resides in the membrane. It catalyses the reaction (+)-piperitol + reduced [NADPH--hemoprotein reductase] + O2 = (+)-sesamin + oxidized [NADPH--hemoprotein reductase] + 2 H2O + H(+). It carries out the reaction (+)-pinoresinol + reduced [NADPH--hemoprotein reductase] + O2 = (+)-piperitol + oxidized [NADPH--hemoprotein reductase] + 2 H2O + H(+). Functionally, involved in the biosynthesis of (+)-sesamin, a furofuran class lignan. Functions in a dual catalytic mode. Catalyzes the synthesis of (+)-sesamin from (+)- pinoresinol by formation of two successive methylenedioxy bridges on (+)-pinoresinol and (+)-piperitol, respectively. The sequence is that of (+)-piperitol/(+)-sesamin synthase CYP81Q2 from Sesamum radiatum (Black benniseed).